The following is a 293-amino-acid chain: Porphobilinogen deaminase (293 aa).

Cys-235 carries the post-translational modification S-(dipyrrolylmethanemethyl)cysteine.

Belongs to the HMBS family. Monomer. The cofactor is dipyrromethane.

It carries out the reaction 4 porphobilinogen + H2O = hydroxymethylbilane + 4 NH4(+). It functions in the pathway porphyrin-containing compound metabolism; protoporphyrin-IX biosynthesis; coproporphyrinogen-III from 5-aminolevulinate: step 2/4. In terms of biological role, tetrapolymerization of the monopyrrole PBG into the hydroxymethylbilane pre-uroporphyrinogen in several discrete steps. The chain is Porphobilinogen deaminase from Ruminiclostridium cellulolyticum (strain ATCC 35319 / DSM 5812 / JCM 6584 / H10) (Clostridium cellulolyticum).